A 319-amino-acid chain; its full sequence is D-alanine--D-alanine ligase B (319 aa).

The ATP-grasp domain maps to K117–A312. A143 to T198 contributes to the ATP binding site. 3 residues coordinate Mg(2+): D266, E279, and N281.

The protein belongs to the D-alanine--D-alanine ligase family. It depends on Mg(2+) as a cofactor. Requires Mn(2+) as cofactor.

The protein localises to the cytoplasm. It catalyses the reaction 2 D-alanine + ATP = D-alanyl-D-alanine + ADP + phosphate + H(+). It functions in the pathway cell wall biogenesis; peptidoglycan biosynthesis. Functionally, cell wall formation. This Pseudomonas aeruginosa (strain ATCC 15692 / DSM 22644 / CIP 104116 / JCM 14847 / LMG 12228 / 1C / PRS 101 / PAO1) protein is D-alanine--D-alanine ligase B.